A 210-amino-acid chain; its full sequence is Transcription factor ALC (210 aa).

A disordered region spans residues 1–49; sequence MGDSDVGDRLPPPSSSDELSSFLRQILSRTPTAQPSSPPKSTNVSSAET. Residues 27–48 show a composition bias toward polar residues; sequence LSRTPTAQPSSPPKSTNVSSAE. Positions 93-142 constitute a bHLH domain; the sequence is IDAQFHNLSEKKRRSKINEKMKALQKLIPNSNKTDKASMLDEAIEYLKQL.

In terms of assembly, homodimer. As to expression, expressed constitutively in roots, leaves, stems, and flowers. Confined to the valve margins of the silique.

It localises to the nucleus. Required for the dehiscence of fruit, especially for the separation of the valve cells from the replum. Promotes the differentiation of a strip of labile nonlignified cells sandwiched between layers of lignified cells. The chain is Transcription factor ALC (ALC) from Arabidopsis thaliana (Mouse-ear cress).